Reading from the N-terminus, the 576-residue chain is MAGUK p55 subfamily member 7 (576 aa).

L27 domains follow at residues 10–63 and 65–122; these read SDTG…YEKE and PMPV…YDPV. The 82-residue stretch at 139 to 220 folds into the PDZ domain; it reads IIRLVKNREP…AITFKIIPSI (82 aa). The SH3 domain occupies 228 to 298; it reads DGKMFVKALF…PSKQFQERRF (71 aa). Residues 368 to 560 form the Guanylate kinase-like domain; that stretch reads YRLVILVGPV…AYNELRSTLE (193 aa).

Belongs to the MAGUK family.

Its subcellular location is the membrane. It localises to the cell junction. The protein resides in the tight junction. The protein localises to the adherens junction. In terms of biological role, acts as an important adapter that promotes epithelial cell polarity and tight junction formation. Involved in the assembly of protein complexes at sites of cell-cell contact. This Xenopus tropicalis (Western clawed frog) protein is MAGUK p55 subfamily member 7 (mpp7).